Here is a 159-residue protein sequence, read N- to C-terminus: Phosphoribosylaminoimidazole carboxylase (159 aa).

Residues Ser-11, Asp-14, Ser-38, Lys-41, Gly-67, and Ser-69 each contribute to the substrate site.

The enzyme catalyses 5-amino-1-(5-phospho-D-ribosyl)imidazole-4-carboxylate + H(+) = 5-amino-1-(5-phospho-beta-D-ribosyl)imidazole + CO2. Its pathway is purine metabolism; IMP biosynthesis via de novo pathway; 5-amino-1-(5-phospho-D-ribosyl)imidazole-4-carboxylate from 5-amino-1-(5-phospho-D-ribosyl)imidazole (carboxylase route): step 1/1. Catalyzes the reversible conversion of 5-aminoimidazole ribonucleotide (AIR) and CO(2) to 4-carboxy-5-aminoimidazole ribonucleotide (CAIR). Does not accept N5-carboxyaminoimidazole ribonucleotide (N5-CAIR) as a substrate. This chain is Phosphoribosylaminoimidazole carboxylase, found in Treponema denticola (strain ATCC 35405 / DSM 14222 / CIP 103919 / JCM 8153 / KCTC 15104).